A 250-amino-acid chain; its full sequence is 2,3-bisphosphoglycerate-dependent phosphoglycerate mutase (250 aa).

Substrate-binding positions include 8–15 (RHGQSAWN), 21–22 (TG), Arg60, 87–90 (ERHY), Lys98, 114–115 (RR), and 183–184 (GN). The Tele-phosphohistidine intermediate role is filled by His9. The Proton donor/acceptor role is filled by Glu87.

Belongs to the phosphoglycerate mutase family. BPG-dependent PGAM subfamily. In terms of assembly, homodimer.

It catalyses the reaction (2R)-2-phosphoglycerate = (2R)-3-phosphoglycerate. The protein operates within carbohydrate degradation; glycolysis; pyruvate from D-glyceraldehyde 3-phosphate: step 3/5. Catalyzes the interconversion of 2-phosphoglycerate and 3-phosphoglycerate. The chain is 2,3-bisphosphoglycerate-dependent phosphoglycerate mutase from Nitratidesulfovibrio vulgaris (strain ATCC 29579 / DSM 644 / CCUG 34227 / NCIMB 8303 / VKM B-1760 / Hildenborough) (Desulfovibrio vulgaris).